The following is a 634-amino-acid chain: DNA-directed RNA polymerase subunit gamma (634 aa).

Residues Cys74, Cys76, Cys89, and Cys92 each contribute to the Zn(2+) site. Mg(2+)-binding residues include Asp471, Asp473, and Asp475.

This sequence belongs to the RNA polymerase beta' chain family. RpoC1 subfamily. As to quaternary structure, in cyanobacteria the RNAP catalytic core is composed of 2 alpha, 1 beta, 1 beta', 1 gamma and 1 omega subunit. When a sigma factor is associated with the core the holoenzyme is formed, which can initiate transcription. The cofactor is Mg(2+). It depends on Zn(2+) as a cofactor.

It carries out the reaction RNA(n) + a ribonucleoside 5'-triphosphate = RNA(n+1) + diphosphate. Functionally, DNA-dependent RNA polymerase catalyzes the transcription of DNA into RNA using the four ribonucleoside triphosphates as substrates. This Prochlorococcus marinus (strain MIT 9303) protein is DNA-directed RNA polymerase subunit gamma.